Here is a 414-residue protein sequence, read N- to C-terminus: Secreted beta-glucosidase sun1 (414 aa).

An N-terminal signal peptide occupies residues 1 to 19 (MKFNTVALTLATAGSLVTA). An N-linked (GlcNAc...) asparagine glycan is attached at asparagine 80. Over residues 115-140 (TSASSSETVQTPAASSSSASSSSTAT) the composition is skewed to low complexity. The tract at residues 115 to 141 (TSASSSETVQTPAASSSSASSSSTATG) is disordered. Asparagine 377 carries an N-linked (GlcNAc...) asparagine glycan.

The protein belongs to the SUN family. Post-translationally, highly glycosylated.

It localises to the secreted. The protein localises to the cell wall. In terms of biological role, cell surface beta-glucosidase involved in cell wall biosynthesis and septation, and thus required for normal growth and correct hyphal morphogenesis. Has hydrolytic activity on linear (1-&gt;3)-beta-D-glucans such as laminaribiose and other laminarioligosaccharides. Also has a minor transferase activity. The protein is Secreted beta-glucosidase sun1 (sun1) of Aspergillus fumigatus (strain ATCC MYA-4609 / CBS 101355 / FGSC A1100 / Af293) (Neosartorya fumigata).